We begin with the raw amino-acid sequence, 138 residues long: Large ribosomal subunit protein uL16 (138 aa).

Belongs to the universal ribosomal protein uL16 family. In terms of assembly, part of the 50S ribosomal subunit.

In terms of biological role, binds 23S rRNA and is also seen to make contacts with the A and possibly P site tRNAs. In Nitrosomonas europaea (strain ATCC 19718 / CIP 103999 / KCTC 2705 / NBRC 14298), this protein is Large ribosomal subunit protein uL16.